A 495-amino-acid chain; its full sequence is MKFELVFIPYPGIGHLRSTVEMAKLLVDRETRLSISVIILPFISEGEVGASDYIAALSASSNNRLRYEVISAVDQPTIEMTTIEIHMKNQEPKVRSTVAKLLEDYSSKPDSPKIAGFVLDMFCTSMVDVANEFGFPSYMFYTSSAGILSVTYHVQMLCDENKYDVSENDYADSEAVLNFPSLSRPYPVKCLPHALAANMWLPVFVNQARKFREMKGILVNTVAELEPYVLKFLSSSDTPPVYPVGPLLHLENQRDDSKDEKRLEIIRWLDQQPPSSVVFLCFGSMGGFGEEQVREIAIALERSGHRFLWSLRRASPNIFKELPGEFTNLEEVLPEGFFDRTKDIGKVIGWAPQVAVLANPAIGGFVTHCGWNSTLESLWFGVPTAAWPLYAEQKFNAFLMVEELGLAVEIRKYWRGEHLAGLPTATVTAEEIEKAIMCLMEQDSDVRKRVKDMSEKCHVALMDGGSSRTALQKFIEEVAKNIVSLDKEFEHVALK.

UDP-alpha-D-glucose-binding positions include S284, 351-353 (APQ), 368-376 (HCGWNSTLE), and 390-393 (YAEQ).

The protein belongs to the UDP-glycosyltransferase family.

This chain is UDP-glycosyltransferase 71B7 (UGT71B7), found in Arabidopsis thaliana (Mouse-ear cress).